We begin with the raw amino-acid sequence, 88 residues long: FXYD domain-containing ion transport regulator 4 (88 aa).

The signal sequence occupies residues 1–20; it reads MEEITCAFLLLLAGLPALEA. Topologically, residues 21-38 are extracellular; that stretch reads SDPVDKDSPFYYDWESLQ. Residues 39–59 traverse the membrane as a helical segment; the sequence is LGGLIFGGLLCIAGIAMALSG. At 60–88 the chain is on the cytoplasmic side; that stretch reads KCKCRRTHKPSSLPGKATPLIIPGSANTC.

Belongs to the FXYD family. Regulatory subunit of the sodium/potassium-transporting ATPase which is composed of a catalytic alpha subunit, a non-catalytic beta subunit and a regulatory subunit. The regulatory subunit, a member of the FXYD protein family, modulates the enzymatic activity in a tissue- and isoform-specific way by changing affinities of the Na+/K+-ATPase toward Na(+), K(+) or ATP.

It localises to the cell membrane. It is found in the basolateral cell membrane. In terms of biological role, associates with and regulates the activity of the sodium/potassium-transporting ATPase (NKA) which catalyzes the hydrolysis of ATP coupled with the exchange of Na(+) and K(+) ions across the plasma membrane. Increases the apparent affinity of the transporter for Na(+) and increases NKA activity. This Mus musculus (Mouse) protein is FXYD domain-containing ion transport regulator 4 (Fxyd4).